Consider the following 357-residue polypeptide: MANLTDLVNLNLSDCSDKIIAEYIWVGGSGIDLRSKARTVKGPITDVSQLPKWNYDGSSTGQAPGEDSEVILYPQAIFKDPFRRGDNILVMCDCYTPQGEPIPTNKRHSAAKIFSHPDVVAEVPWYGIEQEYTLLQKDVNWPLGWPVGGFPGPQGPYYCAAGAEKAFGRDIVDAHYKACIYAGINISGINGEVMPGQWEFQVGPSVGIAAADQVWVARYILERVTEVAGVVLSLDPKPIPGDWNGAGAHTNFSTKSMREPGGYEVIKKAIDKLALRHKEHIAAYGEGNERRLTGRHETADINTFKWGVANRGASIRVGRDTEKEGKGYFEDRRPASNMDPYVVTGMIAETTLLWKQN.

Residues 19 to 99 (IIAEYIWVGG…VMCDCYTPQG (81 aa)) form the GS beta-grasp domain. The region spanning 106 to 357 (KRHSAAKIFS…AETTLLWKQN (252 aa)) is the GS catalytic domain.

Belongs to the glutamine synthetase family. As to quaternary structure, homooctamer. As to expression, expressed in roots and at lower levels in leaf blades and spikelets (rice flower).

The protein resides in the cytoplasm. It catalyses the reaction L-glutamate + NH4(+) + ATP = L-glutamine + ADP + phosphate + H(+). Functionally, high-affinity glutamine synthetase involved in ammonium assimilation. Plays an important role in the primary assimilation of ammonium taken up by roots. Plays a role in maintaining nitrogen metabolic balance during ammonium assimilation, thus controlling plant growth and development. Reassimilates ammonium generated during lignification within developing tillers, which is probably required for the outgrowth of axillary buds. Required for nitrogen-dependent biosynthesis of cytokinin. Active cytokinin in axillary bud meristem is required for axillary bud outgrowth and necessary for tillering. This Oryza sativa subsp. japonica (Rice) protein is Glutamine synthetase cytosolic isozyme 1-2.